Reading from the N-terminus, the 76-residue chain is SFVFYLFTLITVVRAEEFILENEAEDIAPAVHGESGRECIGHRRSCKEDRNGCCRLYTCNCWYPTPGDQWCKCQLW.

Residues 1-15 (SFVFYLFTLITVVRA) form the signal peptide. Residues 16–36 (EEFILENEAEDIAPAVHGESG) constitute a propeptide that is removed on maturation. 4 disulfide bridges follow: cysteine 39–cysteine 54, cysteine 46–cysteine 59, cysteine 53–cysteine 73, and cysteine 61–cysteine 71.

Belongs to the neurotoxin 02 (plectoxin) family. 09 subfamily. Expressed by the venom gland.

Its subcellular location is the secreted. This Phoneutria nigriventer (Brazilian armed spider) protein is U10-ctenitoxin-Pn1a.